A 23-amino-acid polypeptide reads, in one-letter code: Pseudin-3 (23 aa).

Expressed by the skin glands.

Its subcellular location is the secreted. Functionally, possesses antifungal activity against C.albicans and is also active against E.coli and S.aureus. This chain is Pseudin-3, found in Pseudis paradoxa (Paradoxical frog).